Reading from the N-terminus, the 453-residue chain is Tubulin delta chain (453 aa).

A GTP-binding site is contributed by 143-149; sequence AGGTGSG.

It belongs to the tubulin family. As to quaternary structure, found in a complex with TEDC1, TEDC2, TUBE1 and TUBD1.

It localises to the nucleus. The protein resides in the cytoplasm. It is found in the cytoskeleton. The protein localises to the microtubule organizing center. Its subcellular location is the centrosome. It localises to the centriole. The protein resides in the cell projection. It is found in the cilium. Its function is as follows. Acts as a positive regulator of hedgehog signaling and regulates ciliary function. The polypeptide is Tubulin delta chain (TUBD1) (Homo sapiens (Human)).